Here is a 391-residue protein sequence, read N- to C-terminus: Phosphoglycerate kinase (391 aa).

Substrate is bound by residues 21–23 (DLN), arginine 36, 59–62 (HLGR), arginine 113, and arginine 146. ATP is bound by residues lysine 197, glutamate 319, and 345–348 (GGDT).

This sequence belongs to the phosphoglycerate kinase family. Monomer.

It localises to the cytoplasm. The enzyme catalyses (2R)-3-phosphoglycerate + ATP = (2R)-3-phospho-glyceroyl phosphate + ADP. It functions in the pathway carbohydrate degradation; glycolysis; pyruvate from D-glyceraldehyde 3-phosphate: step 2/5. The protein is Phosphoglycerate kinase of Shewanella baltica (strain OS223).